The sequence spans 297 residues: DNA excision repair protein ERCC-1 (297 aa).

Residue M1 is modified to N-acetylmethionine. Positions 1–39 are disordered; the sequence is MDPGKDKEGVPQPSGPPARKKFVIPLDEDEVPPGVAKPL. Residues 17-23 carry the Nuclear localization signal motif; that stretch reads PARKKFV. Residues K21 and K37 each participate in a glycyl lysine isopeptide (Lys-Gly) (interchain with G-Cter in SUMO2) cross-link. A DNA-binding region spans residues 134–156; it reads QSTCALFLSLRYHNLHPDYIHGR. Residues 220 to 297 are hhH2, dimerization with ERCC4/XPF; sequence ADLLMEKLEQ…VLHEPFLKVP (78 aa). K243 is covalently cross-linked (Glycyl lysine isopeptide (Lys-Gly) (interchain with G-Cter in SUMO2)).

It belongs to the ERCC1/RAD10/SWI10 family. Heterodimer composed of ERCC1 isoform 1 and ERCC4/XPF. Interacts with USP45. As to quaternary structure, does not interact with ERCC4/XPF. In terms of processing, ubiquitinated with both 'Lys-48' and 'Lys-63' linkages. Deubiquitinated by USP45.

It is found in the nucleus. The protein resides in the cytoplasm. Functionally, non-catalytic component of a structure-specific DNA repair endonuclease responsible for the 5'-incision during DNA repair. Responsible, in conjunction with SLX4, for the first step in the repair of interstrand cross-links (ICL). Participates in the processing of anaphase bridge-generating DNA structures, which consist in incompletely processed DNA lesions arising during S or G2 phase, and can result in cytokinesis failure. Also required for homology-directed repair (HDR) of DNA double-strand breaks, in conjunction with SLX4. Its function is as follows. Not functional in the nucleotide excision repair pathway. The polypeptide is DNA excision repair protein ERCC-1 (ERCC1) (Homo sapiens (Human)).